Consider the following 90-residue polypeptide: Small ribosomal subunit protein uS17 (90 aa).

It belongs to the universal ribosomal protein uS17 family. In terms of assembly, part of the 30S ribosomal subunit.

Its function is as follows. One of the primary rRNA binding proteins, it binds specifically to the 5'-end of 16S ribosomal RNA. In Burkholderia ambifaria (strain ATCC BAA-244 / DSM 16087 / CCUG 44356 / LMG 19182 / AMMD) (Burkholderia cepacia (strain AMMD)), this protein is Small ribosomal subunit protein uS17.